The following is a 305-amino-acid chain: Glycine--tRNA ligase alpha subunit (305 aa).

It belongs to the class-II aminoacyl-tRNA synthetase family. In terms of assembly, tetramer of two alpha and two beta subunits.

The protein resides in the cytoplasm. The enzyme catalyses tRNA(Gly) + glycine + ATP = glycyl-tRNA(Gly) + AMP + diphosphate. In Ligilactobacillus salivarius (strain UCC118) (Lactobacillus salivarius), this protein is Glycine--tRNA ligase alpha subunit.